The chain runs to 309 residues: Porphobilinogen deaminase (309 aa).

Residue Cys-242 is modified to S-(dipyrrolylmethanemethyl)cysteine.

This sequence belongs to the HMBS family. As to quaternary structure, monomer. Dipyrromethane is required as a cofactor.

The enzyme catalyses 4 porphobilinogen + H2O = hydroxymethylbilane + 4 NH4(+). It functions in the pathway porphyrin-containing compound metabolism; protoporphyrin-IX biosynthesis; coproporphyrinogen-III from 5-aminolevulinate: step 2/4. Functionally, tetrapolymerization of the monopyrrole PBG into the hydroxymethylbilane pre-uroporphyrinogen in several discrete steps. The polypeptide is Porphobilinogen deaminase (Shewanella sediminis (strain HAW-EB3)).